A 286-amino-acid chain; its full sequence is Energy-coupling factor transporter ATP-binding protein EcfA2 (286 aa).

Residues 3 to 246 (IRFDNVSYTY…KEKLADWHIG (244 aa)) enclose the ABC transporter domain. ATP is bound at residue 40–47 (GQTGSGKS).

It belongs to the ABC transporter superfamily. Energy-coupling factor EcfA family. In terms of assembly, forms a stable energy-coupling factor (ECF) transporter complex composed of 2 membrane-embedded substrate-binding proteins (S component), 2 ATP-binding proteins (A component) and 2 transmembrane proteins (T component).

It localises to the cell membrane. Functionally, ATP-binding (A) component of a common energy-coupling factor (ECF) ABC-transporter complex. Unlike classic ABC transporters this ECF transporter provides the energy necessary to transport a number of different substrates. In Staphylococcus aureus (strain MRSA252), this protein is Energy-coupling factor transporter ATP-binding protein EcfA2.